A 156-amino-acid chain; its full sequence is Small ribosomal subunit protein uS7 (156 aa).

This sequence belongs to the universal ribosomal protein uS7 family. Part of the 30S ribosomal subunit. Contacts proteins S9 and S11.

Its function is as follows. One of the primary rRNA binding proteins, it binds directly to 16S rRNA where it nucleates assembly of the head domain of the 30S subunit. Is located at the subunit interface close to the decoding center, probably blocks exit of the E-site tRNA. This is Small ribosomal subunit protein uS7 from Hahella chejuensis (strain KCTC 2396).